The following is a 257-amino-acid chain: 3-dehydroquinate dehydratase (257 aa).

3-dehydroquinate is bound by residues 50 to 52 (EWR) and Arg-86. His-147 (proton donor/acceptor) is an active-site residue. Lys-174 serves as the catalytic Schiff-base intermediate with substrate. Residues Arg-216, Ser-235, and Gln-239 each contribute to the 3-dehydroquinate site.

This sequence belongs to the type-I 3-dehydroquinase family. As to quaternary structure, homodimer.

It catalyses the reaction 3-dehydroquinate = 3-dehydroshikimate + H2O. The protein operates within metabolic intermediate biosynthesis; chorismate biosynthesis; chorismate from D-erythrose 4-phosphate and phosphoenolpyruvate: step 3/7. In terms of biological role, involved in the third step of the chorismate pathway, which leads to the biosynthesis of aromatic amino acids. Catalyzes the cis-dehydration of 3-dehydroquinate (DHQ) and introduces the first double bond of the aromatic ring to yield 3-dehydroshikimate. In Geobacillus kaustophilus (strain HTA426), this protein is 3-dehydroquinate dehydratase.